A 454-amino-acid polypeptide reads, in one-letter code: UDP-N-acetylmuramate--L-alanine ligase (454 aa).

Residue glycine 109 to threonine 115 participates in ATP binding.

It belongs to the MurCDEF family.

The protein localises to the cytoplasm. It catalyses the reaction UDP-N-acetyl-alpha-D-muramate + L-alanine + ATP = UDP-N-acetyl-alpha-D-muramoyl-L-alanine + ADP + phosphate + H(+). It participates in cell wall biogenesis; peptidoglycan biosynthesis. In terms of biological role, cell wall formation. This chain is UDP-N-acetylmuramate--L-alanine ligase, found in Protochlamydia amoebophila (strain UWE25).